A 774-amino-acid polypeptide reads, in one-letter code: MRASLLLSVLRPAGPVAVGISLGFTLSLLSVTWVEEPCGPGPPQPGDSELPPRGNTNAARRPNSVQPGSERERPGAGAGTGESWEPRVLPYHPAQPGQATKKAVRTRYISTELGIRQKLLVAVLTSQATLPTLGVAVNRTLGHRLEHVVFLTGARGRRTPSGMAVVALGEERPIGHLHLALRHLLEQHGDDFDWFFLVPDATYTEAHGLDRLAGHLSLASATHLYLGRPQDFIGGDTTPGRYCHGGFGVLLSRTLLQQLRPHLESCRNDIVSARPDEWLGRCILDATGVGCTGDHEGMHYNYLELSPGEPVQEGDPRFRSALTAHPVRDPVHMYQLHKAFARAELDRTYQEIQELQWEIQNTSRLAADGERASAWPVGIPAPSRPASRFEVLRWDYFTEQYAFSCADGSPRCPLRGADQADVADVLGTALEELNRRYQPALQLQKQQLVNGYRRFDPARGMEYTLDLQLEALTPQGGRWPLTRRVQLLRPLSRVEILPVPYVTEASRLTVLLPLAAAERDLASGFLEAFATAALEPGDAAALTLLLLYEPRQAQRAAHSDVFAPVKAHVAELERRFPGARVPWLSVQTAAPSPLRLMDLLSKKHPLDTLFLLAGPDTVLTPDFLNRCRMHAISGWQAFFPMHFQAFHPAVAPPQGPGPPELGRDTGHFDRQAASEACFYNSDYVAARGRLVAASEQEEELLESLDVYELFLRFSNLHVLRAVEPALLQRYRAQPCSARLSEDLYHRCRQSVLEGLGSRTQLAMLLFEQEQGNST.

Topologically, residues 1–15 are cytoplasmic; that stretch reads MRASLLLSVLRPAGP. The chain crosses the membrane as a helical; Signal-anchor for type II membrane protein span at residues 16 to 34; that stretch reads VAVGISLGFTLSLLSVTWV. Residues 35 to 774 are Lumenal-facing; it reads EEPCGPGPPQ…LFEQEQGNST (740 aa). The interval 37–103 is disordered; the sequence is PCGPGPPQPG…AQPGQATKKA (67 aa). A compositionally biased stretch (polar residues) spans 54-67; sequence GNTNAARRPNSVQP. 2 N-linked (GlcNAc...) asparagine glycosylation sites follow: Asn138 and Asn361. Asp616 contacts a divalent metal cation.

It belongs to the chondroitin N-acetylgalactosaminyltransferase family. Interacts with PRKN. Mn(2+) serves as cofactor. Requires Co(2+) as cofactor. In terms of tissue distribution, isoform 1, isoform 2 and isoform 3 are expressed in brain (at protein level).

It is found in the golgi apparatus. Its subcellular location is the golgi stack membrane. It localises to the cytoplasm. The protein resides in the cytosol. The protein localises to the mitochondrion. It is found in the mitochondrion matrix. It catalyses the reaction 3-O-(beta-D-GlcA-(1-&gt;3)-beta-D-GalNAc-(1-&gt;4)-beta-D-GlcA-(1-&gt;3)-beta-D-Gal-(1-&gt;3)-beta-D-Gal-(1-&gt;4)-beta-D-Xyl)-L-seryl-[protein] + UDP-N-acetyl-alpha-D-galactosamine = 3-O-(beta-D-GalNAc-(1-&gt;4)-beta-D-GlcA-(1-&gt;3)-beta-D-GalNAc-(1-&gt;4)-beta-D-GlcA-(1-&gt;3)-beta-D-Gal-(1-&gt;3)-beta-D-Gal-(1-&gt;4)-beta-D-Xyl)-L-seryl-[protein] + UDP + H(+). The enzyme catalyses 3-O-{beta-D-GlcA-(1-&gt;3)-[beta-D-GalNAc-(1-&gt;4)-beta-D-GlcA-(1-&gt;3)](n)-beta-D-GalNAc-(1-&gt;4)-beta-D-GlcA-(1-&gt;3)-beta-D-Gal-(1-&gt;3)-beta-D-Gal-(1-&gt;4)-beta-D-Xyl}-L-seryl-[protein] + UDP-N-acetyl-alpha-D-galactosamine = 3-O-{[beta-D-GalNAc-(1-&gt;4)-beta-D-GlcA-(1-&gt;3)](n+1)-beta-D-GalNAc-(1-&gt;4)-beta-D-GlcA-(1-&gt;3)-beta-D-Gal-(1-&gt;3)-beta-D-Gal-(1-&gt;4)-beta-D-Xyl}-L-seryl-[protein] + UDP + H(+). It carries out the reaction 3-O-(beta-D-GalNAc-(1-&gt;4)-beta-D-GlcA-(1-&gt;3)-beta-D-Gal-(1-&gt;3)-beta-D-Gal-(1-&gt;4)-beta-D-Xyl)-L-seryl-[protein] + UDP-alpha-D-glucuronate = 3-O-(beta-D-GlcA-(1-&gt;3)-beta-D-GalNAc-(1-&gt;4)-beta-D-GlcA-(1-&gt;3)-beta-D-Gal-(1-&gt;3)-beta-D-Gal-(1-&gt;4)-beta-D-Xyl)-L-seryl-[protein] + UDP + H(+). The catalysed reaction is 3-O-{[beta-D-GalNAc-(1-&gt;4)-beta-D-GlcA-(1-&gt;3)](n)-beta-D-GalNAc-(1-&gt;4)-beta-D-GlcA-(1-&gt;3)-beta-D-Gal-(1-&gt;3)-beta-D-Gal-(1-&gt;4)-beta-D-Xyl}-L-seryl-[protein] + UDP-alpha-D-glucuronate = 3-O-{beta-D-GlcA-(1-&gt;3)-[beta-D-GalNAc-(1-&gt;4)-beta-D-GlcA-(1-&gt;3)](n)-beta-D-GalNAc-(1-&gt;4)-beta-D-GlcA-(1-&gt;3)-beta-D-Gal-(1-&gt;3)-beta-D-Gal-(1-&gt;4)-beta-D-Xyl}-L-seryl-[protein] + UDP + H(+). In terms of biological role, has both beta-1,3-glucuronic acid and beta-1,4-N-acetylgalactosamine transferase activity. Transfers glucuronic acid (GlcUA) from UDP-GlcUA and N-acetylgalactosamine (GalNAc) from UDP-GalNAc to the non-reducing end of the elongating chondroitin polymer. Seems to act as a specific activating factor for CHSY1 in chondroitin polymerization. May facilitate PRKN transport into the mitochondria. In collaboration with PRKN, may enhance cell viability and protect cells from oxidative stress. This chain is Chondroitin sulfate synthase 2, found in Mus musculus (Mouse).